The sequence spans 201 residues: 7-methyl-GTP pyrophosphatase (201 aa).

Residue Asp73 is the Proton acceptor of the active site.

It belongs to the Maf family. YceF subfamily. A divalent metal cation serves as cofactor.

The protein localises to the cytoplasm. It carries out the reaction N(7)-methyl-GTP + H2O = N(7)-methyl-GMP + diphosphate + H(+). In terms of biological role, nucleoside triphosphate pyrophosphatase that hydrolyzes 7-methyl-GTP (m(7)GTP). May have a dual role in cell division arrest and in preventing the incorporation of modified nucleotides into cellular nucleic acids. This chain is 7-methyl-GTP pyrophosphatase, found in Thiobacillus denitrificans (strain ATCC 25259 / T1).